The sequence spans 110 residues: UPF0122 protein STER_0914 (110 aa).

Belongs to the UPF0122 family.

Its function is as follows. Might take part in the signal recognition particle (SRP) pathway. This is inferred from the conservation of its genetic proximity to ftsY/ffh. May be a regulatory protein. The chain is UPF0122 protein STER_0914 from Streptococcus thermophilus (strain ATCC BAA-491 / LMD-9).